A 367-amino-acid chain; its full sequence is UDP-N-acetylenolpyruvoylglucosamine reductase (367 aa).

The FAD-binding PCMH-type domain occupies 29–205 (VGPVAQRVIT…LEVEFKLDAS (177 aa)). Arg-177 is an active-site residue. Ser-260 functions as the Proton donor in the catalytic mechanism. The active site involves Glu-359.

It belongs to the MurB family. Requires FAD as cofactor.

The protein localises to the cytoplasm. It carries out the reaction UDP-N-acetyl-alpha-D-muramate + NADP(+) = UDP-N-acetyl-3-O-(1-carboxyvinyl)-alpha-D-glucosamine + NADPH + H(+). It functions in the pathway cell wall biogenesis; peptidoglycan biosynthesis. In terms of biological role, cell wall formation. In Mycobacterium leprae (strain Br4923), this protein is UDP-N-acetylenolpyruvoylglucosamine reductase.